A 75-amino-acid polypeptide reads, in one-letter code: Cytoplasmic envelopment protein 3 (75 aa).

Glycine 2 carries N-myristoyl glycine; by host lipidation. The span at 53 to 65 shows a compositional bias: acidic residues; sequence EGLEYDEDSENDE. Residues 53 to 75 are disordered; the sequence is EGLEYDEDSENDELLFLPNKKPN.

Belongs to the herpesviridae cytoplasmic envelopment protein 3 family. Interacts with BGLF2; this interaction is essential for the proper localization of each protein to the assembly complex and thus for the production of infectious virus. Post-translationally, myristoylation and palmitoylation (probably on one or more of the nearby cysteines at the N-terminus) enable membrane-binding and Golgi apparatus-specific targeting and are essential for efficient packaging. Phosphorylated. Phosphorylation does not seem to be required for recycling to the host Golgi apparatus. Packaging is selective for underphosphorylated forms.

Its subcellular location is the virion tegument. It is found in the virion membrane. The protein resides in the host cell membrane. It localises to the host Golgi apparatus membrane. Its function is as follows. Plays an important role in the cytoplasmic envelopment of tegument proteins and capsids during the assembly and egress processes. Also participates in viral entry at the fusion step probably by regulating the core fusion machinery. The sequence is that of Cytoplasmic envelopment protein 3 from Homo sapiens (Human).